The chain runs to 321 residues: Cytochrome f (321 aa).

The N-terminal stretch at 1 to 35 (MQNTNTLNWINKLIYLSISIPIFFLILVTTYPNSV) is a signal peptide. Positions 38, 58, 61, and 62 each coordinate heme. A helical transmembrane segment spans residues 287–307 (MEGLILFFISVILAQVFLVLK).

This sequence belongs to the cytochrome f family. The 4 large subunits of the cytochrome b6-f complex are cytochrome b6, subunit IV (17 kDa polypeptide, petD), cytochrome f and the Rieske protein, while the 4 small subunits are PetG, PetL, PetM and PetN. The complex functions as a dimer. The cofactor is heme.

The protein resides in the plastid. It is found in the chloroplast thylakoid membrane. Its function is as follows. Component of the cytochrome b6-f complex, which mediates electron transfer between photosystem II (PSII) and photosystem I (PSI), cyclic electron flow around PSI, and state transitions. This is Cytochrome f from Chara vulgaris (Common stonewort).